We begin with the raw amino-acid sequence, 1368 residues long: DNA-directed RNA polymerase subunit beta (1368 aa).

It belongs to the RNA polymerase beta chain family. In terms of assembly, the RNAP catalytic core consists of 2 alpha, 1 beta, 1 beta' and 1 omega subunit. When a sigma factor is associated with the core the holoenzyme is formed, which can initiate transcription.

It catalyses the reaction RNA(n) + a ribonucleoside 5'-triphosphate = RNA(n+1) + diphosphate. Functionally, DNA-dependent RNA polymerase catalyzes the transcription of DNA into RNA using the four ribonucleoside triphosphates as substrates. In Burkholderia ambifaria (strain MC40-6), this protein is DNA-directed RNA polymerase subunit beta.